A 290-amino-acid chain; its full sequence is Short chain dehydrogenase andI (290 aa).

NADP(+) is bound by residues Ile-35, Asn-120, Arg-154, Tyr-186, Lys-190, Val-219, and Thr-221. Tyr-186 serves as the catalytic Proton acceptor. Catalysis depends on Lys-190, which acts as the Lowers pKa of active site Tyr.

Belongs to the short-chain dehydrogenases/reductases (SDR) family.

Its pathway is secondary metabolite biosynthesis; terpenoid biosynthesis. Its function is as follows. Short chain dehydrogenase; part of the gene cluster that mediates the biosynthesis of anditomin, a fungal meroterpenoid. The first step of the pathway is the synthesis of 3,5-dimethylorsellinic acid (DMOA) by the polyketide synthase andM. DMOA is then converted to the phthalide compound 5,7-dihydroxy-4,6-dimethylphthalide (DHDMP) by the cytochrome P450 monooxygenase andK, which is further prenylated by the prenyltransferase andD to yield farnesyl-DHDMP. Further epoxidation by the FAD-dependent monooxygenase andE leads to epoxyfarnesyl-DHDMP. The next step involves the terpene cyclase andB that converts epoxyfarnesyl-DHDMP into preandiloid A through opening of the epoxide ring followed by the cyclization of the farnesyl moiety. Preandiloid A is in turn oxidized at the C-3 hydroxyl group to yield preandiloid B by the dehydrogenase andC. The dioxygenase andA is solely responsible for the dehydrogenation of preandiloid B leading to the enone preandiloid C, as well as for the intriguing structural rearrangement to generate the bicyclo[2.2.2]octane core, transforming preandiloid C into andiconin. FAD-binding monooxygenase andJ then produces andilesin D which is reduced by dehydrogenase andI to yield andilesin A. Action of acetyltransferase andG followed by a spontaneous acetate elimination leads then to andilesin B, which is in turn substrate of the short chain dehydrogenase andH to yield andilesin C. Finally, the dioxygenase andF catalyzes the transformation of andilesin C to anditomin. The protein is Short chain dehydrogenase andI of Emericella variicolor (Aspergillus stellatus).